Here is a 73-residue protein sequence, read N- to C-terminus: Capsid protein G8P (73 aa).

Residues 1–23 (MKKSLVLKASVAVATLVPMLSFA) form the signal peptide. At 24–47 (AEGDDPAKAAFNSLQASATEYIGY) the chain is on the periplasmic side. A helical transmembrane segment spans residues 48–68 (AWAMVVVIVGATIGIKLFKKF). The Cytoplasmic segment spans residues 69 to 73 (TSKAS).

This sequence belongs to the inovirus capsid protein family. In terms of assembly, homomultimerizes. There are about 2,700 copies of this protein in the phage capsid.

The protein localises to the virion. The protein resides in the host cell inner membrane. Its function is as follows. Self assembles to form a helical capsid wrapping up the viral genomic DNA. The capsid displays a filamentous structure with a length of 760-1950 nm and a width of 6-8 nm. The virion assembly and budding take place at the host inner membrane. The sequence is that of Capsid protein G8P (VIII) from Enterobacteria phage M13 (Bacteriophage M13).